We begin with the raw amino-acid sequence, 373 residues long: GDP-mannose 4,6-dehydratase (373 aa).

NADP(+) contacts are provided by residues 9–14 (GVTGQD), 64–65 (DL), 86–90 (LGAMS), and Tyr-101. Thr-133 is an active-site residue. Residues Glu-135 and Tyr-157 each act as nucleophile in the active site. Residues Lys-161, His-187, and Arg-192 each coordinate NADP(+).

It belongs to the NAD(P)-dependent epimerase/dehydratase family. GDP-mannose 4,6-dehydratase subfamily. It depends on NADP(+) as a cofactor.

The enzyme catalyses GDP-alpha-D-mannose = GDP-4-dehydro-alpha-D-rhamnose + H2O. The protein operates within nucleotide-sugar biosynthesis; GDP-L-fucose biosynthesis via de novo pathway; GDP-L-fucose from GDP-alpha-D-mannose: step 1/2. Its function is as follows. Catalyzes the conversion of GDP-D-mannose to GDP-4-dehydro-6-deoxy-D-mannose. This is GDP-mannose 4,6-dehydratase from Escherichia coli O157:H7.